The chain runs to 782 residues: DNA repair and recombination protein RAD54-like (782 aa).

Residues 1-20 show a composition bias toward polar residues; the sequence is MRRSLAPSQRGGQRLSSRND. The interval 1–28 is disordered; the sequence is MRRSLAPSQRGGQRLSSRNDFTPPLLKK. A required for chromatin remodeling, strand pairing activities and coupling of ATPase activity region spans residues 2–9; the sequence is RRSLAPSQ. At T22 the chain carries Phosphothreonine. The Helicase ATP-binding domain maps to 168–343; that stretch reads EGKRGNFNGC…FSLVNFVNPE (176 aa). Residue 181–188 participates in ATP binding; sequence DEMGLGKT. The DEGH box motif lies at 294 to 297; that stretch reads DEGH. One can recognise a Helicase C-terminal domain in the interval 501 to 658; it reads LLDFMLAAIR…NNESAEKHFT (158 aa). Positions 741–753 are enriched in polar residues; it reads SQKIETTPATETS. Positions 741–782 are disordered; that stretch reads SQKIETTPATETSVEAKPEPERRKRPAMPLSDDSADEDFQGF. Residues 773-782 show a composition bias toward acidic residues; that stretch reads DSADEDFQGF.

This sequence belongs to the SNF2/RAD54 helicase family. As to quaternary structure, interacts (via N-terminus) with spn-A/Rad51.

It localises to the nucleus. Involved in mitotic DNA repair and meiotic recombination. Functions in the recombinational DNA repair pathway. Essential for interhomolog gene conversion (GC), but may have a less important role in intersister GC than spn-A/Rad51. In the presence of DNA, spn-A/Rad51 enhances the ATPase activity of okr/Rad54. This chain is DNA repair and recombination protein RAD54-like, found in Drosophila pseudoobscura pseudoobscura (Fruit fly).